The primary structure comprises 133 residues: Fatty acid-binding protein homolog 2 (133 aa).

A fatty acid contacts are provided by residues Arg107 and 127-129; that span reads RTY.

Belongs to the calycin superfamily. Fatty-acid binding protein (FABP) family.

May play a role in the acquisition, storage, and transport of lipids, and may be important to the organism since it is incapable of synthesizing most of its lipids de novo. This chain is Fatty acid-binding protein homolog 2 (FABP2), found in Echinococcus granulosus (Hydatid tapeworm).